The following is a 166-amino-acid chain: NAD(P)H-quinone oxidoreductase subunit I, chloroplastic (166 aa).

2 4Fe-4S ferredoxin-type domains span residues 55–84 (GRIHFEFDKCIACEVCVRVCPIDLPVVDWK) and 95–124 (LNYSIDFGICIFCGNCVEYCPTNCLSMTEE). [4Fe-4S] cluster-binding residues include Cys-64, Cys-67, Cys-70, Cys-74, Cys-104, Cys-107, Cys-110, and Cys-114.

This sequence belongs to the complex I 23 kDa subunit family. As to quaternary structure, NDH is composed of at least 16 different subunits, 5 of which are encoded in the nucleus. [4Fe-4S] cluster serves as cofactor.

The protein localises to the plastid. The protein resides in the chloroplast thylakoid membrane. It catalyses the reaction a plastoquinone + NADH + (n+1) H(+)(in) = a plastoquinol + NAD(+) + n H(+)(out). It carries out the reaction a plastoquinone + NADPH + (n+1) H(+)(in) = a plastoquinol + NADP(+) + n H(+)(out). Functionally, NDH shuttles electrons from NAD(P)H:plastoquinone, via FMN and iron-sulfur (Fe-S) centers, to quinones in the photosynthetic chain and possibly in a chloroplast respiratory chain. The immediate electron acceptor for the enzyme in this species is believed to be plastoquinone. Couples the redox reaction to proton translocation, and thus conserves the redox energy in a proton gradient. This Raillardella argentea (Silky raillardella) protein is NAD(P)H-quinone oxidoreductase subunit I, chloroplastic.